A 133-amino-acid polypeptide reads, in one-letter code: Small ribosomal subunit protein uS8 (133 aa).

Belongs to the universal ribosomal protein uS8 family. Part of the 30S ribosomal subunit. Contacts proteins S5 and S12.

One of the primary rRNA binding proteins, it binds directly to 16S rRNA central domain where it helps coordinate assembly of the platform of the 30S subunit. The sequence is that of Small ribosomal subunit protein uS8 from Rippkaea orientalis (strain PCC 8801 / RF-1) (Cyanothece sp. (strain PCC 8801)).